The chain runs to 331 residues: Fructose-1,6-bisphosphatase class 1 2 (331 aa).

4 residues coordinate Mg(2+): Glu80, Asp98, Leu100, and Asp101. Substrate is bound by residues 101 to 104 and Asn189; that span reads DGSS. Glu261 is a Mg(2+) binding site.

It belongs to the FBPase class 1 family. In terms of assembly, homotetramer. It depends on Mg(2+) as a cofactor.

The protein resides in the cytoplasm. It carries out the reaction beta-D-fructose 1,6-bisphosphate + H2O = beta-D-fructose 6-phosphate + phosphate. It functions in the pathway carbohydrate biosynthesis; Calvin cycle. In Cereibacter sphaeroides (strain ATCC 17023 / DSM 158 / JCM 6121 / CCUG 31486 / LMG 2827 / NBRC 12203 / NCIMB 8253 / ATH 2.4.1.) (Rhodobacter sphaeroides), this protein is Fructose-1,6-bisphosphatase class 1 2.